A 358-amino-acid polypeptide reads, in one-letter code: Phenylalanine--tRNA ligase alpha subunit (358 aa).

Glutamate 279 contacts Mg(2+).

This sequence belongs to the class-II aminoacyl-tRNA synthetase family. Phe-tRNA synthetase alpha subunit type 1 subfamily. In terms of assembly, tetramer of two alpha and two beta subunits. Requires Mg(2+) as cofactor.

It is found in the cytoplasm. The catalysed reaction is tRNA(Phe) + L-phenylalanine + ATP = L-phenylalanyl-tRNA(Phe) + AMP + diphosphate + H(+). The chain is Phenylalanine--tRNA ligase alpha subunit from Variovorax paradoxus (strain S110).